Here is a 784-residue protein sequence, read N- to C-terminus: Cell wall protein Lmo0130 (784 aa).

Residues 1–34 (MKVNKFFKKTTHVLLVAGLTIGLTAPFTGTTAQA) form the signal peptide. The disordered stretch occupies residues 690-761 (ATTPPDNGNG…NTSLPTTGDT (72 aa)). Positions 697–729 (GNGGTDNGNGNGNNGGTDGNGGTNNGNGSGTNG) are enriched in gly residues. Residues 730 to 759 (GTTTTEDPTTTTSNTSTTGTSSNTSLPTTG) show a composition bias toward low complexity. An LPXTG sorting signal motif is present at residues 755–759 (LPTTG). Threonine 758 carries the post-translational modification Pentaglycyl murein peptidoglycan amidated threonine. Positions 759-784 (GDTAGLATVFGVILTTTALYVLRKRS) are cleaved as a propeptide — removed by sortase A.

The protein localises to the secreted. It localises to the cell wall. In Listeria monocytogenes serovar 1/2a (strain ATCC BAA-679 / EGD-e), this protein is Cell wall protein Lmo0130.